Here is a 246-residue protein sequence, read N- to C-terminus: 3-deoxy-manno-octulosonate cytidylyltransferase (246 aa).

Belongs to the KdsB family.

Its subcellular location is the cytoplasm. It carries out the reaction 3-deoxy-alpha-D-manno-oct-2-ulosonate + CTP = CMP-3-deoxy-beta-D-manno-octulosonate + diphosphate. It functions in the pathway nucleotide-sugar biosynthesis; CMP-3-deoxy-D-manno-octulosonate biosynthesis; CMP-3-deoxy-D-manno-octulosonate from 3-deoxy-D-manno-octulosonate and CTP: step 1/1. The protein operates within bacterial outer membrane biogenesis; lipopolysaccharide biosynthesis. In terms of biological role, activates KDO (a required 8-carbon sugar) for incorporation into bacterial lipopolysaccharide in Gram-negative bacteria. This chain is 3-deoxy-manno-octulosonate cytidylyltransferase, found in Rickettsia prowazekii (strain Madrid E).